Reading from the N-terminus, the 401-residue chain is Exodeoxyribonuclease 7 large subunit (401 aa).

Belongs to the XseA family. As to quaternary structure, heterooligomer composed of large and small subunits.

The protein localises to the cytoplasm. It catalyses the reaction Exonucleolytic cleavage in either 5'- to 3'- or 3'- to 5'-direction to yield nucleoside 5'-phosphates.. Bidirectionally degrades single-stranded DNA into large acid-insoluble oligonucleotides, which are then degraded further into small acid-soluble oligonucleotides. The sequence is that of Exodeoxyribonuclease 7 large subunit from Clostridioides difficile (strain 630) (Peptoclostridium difficile).